Consider the following 327-residue polypeptide: Phenylalanine--tRNA ligase alpha subunit (327 aa).

Mg(2+) is bound at residue Glu-252.

Belongs to the class-II aminoacyl-tRNA synthetase family. Phe-tRNA synthetase alpha subunit type 1 subfamily. In terms of assembly, tetramer of two alpha and two beta subunits. Mg(2+) is required as a cofactor.

The protein resides in the cytoplasm. It carries out the reaction tRNA(Phe) + L-phenylalanine + ATP = L-phenylalanyl-tRNA(Phe) + AMP + diphosphate + H(+). This is Phenylalanine--tRNA ligase alpha subunit from Shigella flexneri.